We begin with the raw amino-acid sequence, 344 residues long: L-rhamnose-proton symporter (344 aa).

10 helical membrane-spanning segments follow: residues 4-24 (AITMGIFWHLIGAASAACFYA), 38-58 (WSVGGIVSWIILPWAISALLL), 68-88 (FSLSTLLPVFLFGAMWGIGNI), 101-121 (MGIGIAIGITLIVGTLMTPII), 137-157 (TLLGVLVALIGVGIVTRAGQL), 175-195 (LVLAVMCGIFSAGMSFAMNAA), 214-234 (LPSYVIIMGGGAIINLGFCFI), 259-279 (VLLSALGGLMWYLQFFFYAWG), 290-310 (ISWMLHMSFYVLCGGIVGLVL), and 323-343 (VLSLGCVVIIVAANIVGIGMA).

The protein belongs to the L-rhamnose transporter (TC 2.A.7.6) family.

The protein resides in the cell inner membrane. It catalyses the reaction L-rhamnopyranose(in) + H(+)(in) = L-rhamnopyranose(out) + H(+)(out). Uptake of L-rhamnose across the cytoplasmic membrane with the concomitant transport of protons into the cell (symport system). The protein is L-rhamnose-proton symporter of Escherichia coli (strain 55989 / EAEC).